The sequence spans 436 residues: UDP-N-acetylmuramate--L-alanine ligase (436 aa).

Gly-108 to Ser-114 is a binding site for ATP.

Belongs to the MurCDEF family.

The protein localises to the cytoplasm. It carries out the reaction UDP-N-acetyl-alpha-D-muramate + L-alanine + ATP = UDP-N-acetyl-alpha-D-muramoyl-L-alanine + ADP + phosphate + H(+). It functions in the pathway cell wall biogenesis; peptidoglycan biosynthesis. Functionally, cell wall formation. The chain is UDP-N-acetylmuramate--L-alanine ligase from Bacillus cereus (strain ZK / E33L).